The following is a 631-amino-acid chain: Phosphomethylpyrimidine synthase (631 aa).

The interval Thr-54 to Tyr-80 is disordered. Residues Gly-58 to Thr-67 are compositionally biased toward basic and acidic residues. Residues Asn-239, Met-268, Tyr-297, His-333, Ser-353–Gly-355, Asp-394–Arg-397, and Glu-433 contribute to the substrate site. His-437 is a Zn(2+) binding site. Residue Tyr-460 participates in substrate binding. His-501 serves as a coordination point for Zn(2+). [4Fe-4S] cluster is bound by residues Cys-581, Cys-584, and Cys-589.

It belongs to the ThiC family. In terms of assembly, homodimer. Requires [4Fe-4S] cluster as cofactor.

The catalysed reaction is 5-amino-1-(5-phospho-beta-D-ribosyl)imidazole + S-adenosyl-L-methionine = 4-amino-2-methyl-5-(phosphooxymethyl)pyrimidine + CO + 5'-deoxyadenosine + formate + L-methionine + 3 H(+). The protein operates within cofactor biosynthesis; thiamine diphosphate biosynthesis. In terms of biological role, catalyzes the synthesis of the hydroxymethylpyrimidine phosphate (HMP-P) moiety of thiamine from aminoimidazole ribotide (AIR) in a radical S-adenosyl-L-methionine (SAM)-dependent reaction. The protein is Phosphomethylpyrimidine synthase of Klebsiella pneumoniae subsp. pneumoniae (strain ATCC 700721 / MGH 78578).